The following is a 258-amino-acid chain: Small ribosomal subunit protein uS2 (258 aa).

The protein belongs to the universal ribosomal protein uS2 family.

This Streptococcus suis (strain 98HAH33) protein is Small ribosomal subunit protein uS2.